Here is a 323-residue protein sequence, read N- to C-terminus: Porphobilinogen deaminase (323 aa).

The residue at position 251 (cysteine 251) is an S-(dipyrrolylmethanemethyl)cysteine.

It belongs to the HMBS family. Monomer. Dipyrromethane is required as a cofactor.

It catalyses the reaction 4 porphobilinogen + H2O = hydroxymethylbilane + 4 NH4(+). It participates in porphyrin-containing compound metabolism; protoporphyrin-IX biosynthesis; coproporphyrinogen-III from 5-aminolevulinate: step 2/4. The protein operates within porphyrin-containing compound metabolism; chlorophyll biosynthesis. In terms of biological role, tetrapolymerization of the monopyrrole PBG into the hydroxymethylbilane pre-uroporphyrinogen in several discrete steps. The sequence is that of Porphobilinogen deaminase (hemC) from Nostoc sp. (strain PCC 7120 / SAG 25.82 / UTEX 2576).